The sequence spans 195 residues: Coagulogen (195 aa).

Positions 1–20 (MEKKLLGIAILFVTVVSVLA) are cleaved as a signal peptide. 8 disulfides stabilise this stretch: Cys28/Cys188, Cys30/Cys115, Cys80/Cys182, Cys85/Cys141, Cys95/Cys189, Cys108/Cys161, Cys147/Cys191, and Cys155/Cys193.

This sequence belongs to the coagulin family. Coagulogen is cleaved after Arg-38 and Arg-66 by a clotting enzyme contained in the hemocyte and activated by a bacterial endotoxin (lipopolysaccharide). This cleavage releases the peptide C and leaves 2 chains of coagulin, A and B, linked by two disulfide bonds. Coagulin molecules interlink to form a gel. In terms of tissue distribution, hemolymph.

It localises to the secreted. In terms of biological role, coagulogen is a gel-forming protein of hemolymph; it hinders the spread of invaders by immobilizing them. This Limulus polyphemus (Atlantic horseshoe crab) protein is Coagulogen.